The primary structure comprises 403 residues: Phosphoserine phosphatase RsbP (403 aa).

The 42-residue stretch at 1-42 (MDKQLNDAPCGFLALSEEGSIIAANRTLIKILDYEPEQVIGQ) folds into the PAS domain. In terms of domain architecture, PPM-type phosphatase spans 191 to 402 (QVQIDSYYNA…DDECFILVDV (212 aa)).

It depends on Mn(2+) as a cofactor.

The enzyme catalyses O-phospho-L-serine + H2O = L-serine + phosphate. It carries out the reaction O-phospho-D-serine + H2O = D-serine + phosphate. Its function is as follows. Positive regulator of sigma-B activity. Dephosphorylates RsbV in response to energy stress. The chain is Phosphoserine phosphatase RsbP (rsbP) from Bacillus subtilis (strain 168).